The sequence spans 387 residues: Protein disulfide isomerase pTAC5, chloroplastic (387 aa).

The N-terminal 40 residues, 1-40 (MASSSLPLSLPFPLRSLTSTTRSLPFQCSPLFFSIPSSIV), are a transit peptide targeting the chloroplast. Coiled coils occupy residues 72–106 (EQRW…LGNS) and 143–163 (REQI…AEEK). The CR-type zinc-finger motif lies at 318–387 (PVDRSESTNT…CDVCDGKKNL (70 aa)).

Interacts with HSP21; the formed complex associates with the plastid-encoded RNA polymerase (PEP) complex not only during transcription initiation, but also during elongation and termination, and with a stronger efficiency in illuminated chloroplasts. Binds to promoter regions of PEP-dependent genes, especially after a heat stress. Interacts with FLN2.

Its subcellular location is the plastid. The protein resides in the chloroplast stroma. The protein localises to the chloroplast nucleoid. It catalyses the reaction Catalyzes the rearrangement of -S-S- bonds in proteins.. Exhibits zinc-dependent disulfide isomerase activity. Required for seedling and chloroplast development under heat stress, probably by maintaining plastid-encoded RNA polymerase (PEP)-dependent transcription. This is Protein disulfide isomerase pTAC5, chloroplastic from Arabidopsis thaliana (Mouse-ear cress).